The primary structure comprises 61 residues: [Thr6, Val10, Asp11]-phyllokinin (61 aa).

Residues 1–22 (MSFLKKSLFLVLFLGLVSFSIC) form the signal peptide. The propeptide occupies 23–50 (EEEKRETEEEENEDEMNEESEEKRESPE). The tract at residues 24 to 61 (EEKRETEEEENEDEMNEESEEKRESPERPPGFTPFRVD) is disordered. Residues 30-42 (EEEENEDEMNEES) are compositionally biased toward acidic residues.

It belongs to the frog skin active peptide (FSAP) family. Bradykinin-related peptide subfamily. As to expression, expressed by the skin glands.

It localises to the secreted. Induces relaxation of rat smooth muscle from tail artery and contraction of that from ileum, urinary bladder and uterus. Binds to both bradykinin receptor B1 (BDKRB1) and B2 (BDKRB2). This is [Thr6, Val10, Asp11]-phyllokinin from Agalychnis spurrelli (Gliding leaf frog).